The chain runs to 145 residues: Large ribosomal subunit protein uL16 (145 aa).

Residues 1-17 (MLMPKRVKHRRVHRGRM) are compositionally biased toward basic residues. The disordered stretch occupies residues 1 to 22 (MLMPKRVKHRRVHRGRMTGKAT).

It belongs to the universal ribosomal protein uL16 family. As to quaternary structure, part of the 50S ribosomal subunit.

Functionally, binds 23S rRNA and is also seen to make contacts with the A and possibly P site tRNAs. The protein is Large ribosomal subunit protein uL16 of Ruminiclostridium cellulolyticum (strain ATCC 35319 / DSM 5812 / JCM 6584 / H10) (Clostridium cellulolyticum).